A 496-amino-acid polypeptide reads, in one-letter code: Probable CtpA-like serine protease (496 aa).

Residues 1-16 (MDDKQHTSSSDDERAE) are compositionally biased toward basic and acidic residues. The segment at 1–27 (MDDKQHTSSSDDERAEIATSNQDQETN) is disordered. Over residues 18-27 (ATSNQDQETN) the composition is skewed to polar residues. The chain crosses the membrane as a helical span at residues 39 to 59 (FISILIGTILITAVITVVAYI). A PDZ domain is found at 124-206 (TKSFNEGVSG…TEVTLTVQRG (83 aa)). Active-site charge relay system residues include Ser-329, Asp-340, and Lys-354.

This sequence belongs to the peptidase S41A family.

The protein resides in the cell membrane. The protein is Probable CtpA-like serine protease of Staphylococcus aureus (strain MSSA476).